Reading from the N-terminus, the 679-residue chain is Protein polyglycylase TTLL10 (679 aa).

The segment covering 1 to 15 (MPLHPPARRPHGHRR) has biased composition (basic residues). Disordered stretches follow at residues 1-33 (MPLHPPARRPHGHRRNGSEAQTEATTQDTGRLS), 49-77 (GHRAARRPRRGVGTTSASRAPRPGALMPA), and 96-124 (VSFKRPKRSRTHQSHTKVPGWTHEKRMGS). Over residues 18–30 (SEAQTEATTQDTG) the composition is skewed to polar residues. Residues 96 to 110 (VSFKRPKRSRTHQSH) show a composition bias toward basic residues. The 372-residue stretch at 172–543 (QGPFFYIGGT…TCQKSLHSQK (372 aa)) folds into the TTL domain. ATP-binding positions include lysine 304, 310–311 (QG), 353–356 (QRYV), 366–368 (KFD), and 409–410 (TN). A protein is bound at residue glutamine 310. Positions 489, 502, and 504 each coordinate Mg(2+). Residues 605 to 679 (DRPAARKSMS…EQRSTSHRGS (75 aa)) form a disordered region.

It depends on Mg(2+) as a cofactor.

It is found in the cytoplasm. It localises to the cytoskeleton. Its subcellular location is the cell projection. The protein resides in the cilium. The protein localises to the cilium axoneme. The enzyme catalyses (glycyl)(n)-glycyl-L-glutamyl-[protein] + glycine + ATP = (glycyl)(n+1)-glycyl-L-glutamyl-[protein] + ADP + phosphate + H(+). Its function is as follows. Polyglycylase which modifies both tubulin and non-tubulin proteins, generating polyglycine side chains of variable lengths on the gamma-carboxyl groups of specific glutamate residues of target proteins. Involved in the elongation step rather than the initiation step of the polyglycylation reaction. Polyglycylates alpha-tubulin and beta-tubulin. Polyglycylates non-tubulin proteins such as nucleosome assembly protein NAP1. The polypeptide is Protein polyglycylase TTLL10 (Rattus norvegicus (Rat)).